Reading from the N-terminus, the 505-residue chain is Annexin A11 (505 aa).

Pro residues-rich tracts occupy residues 1–17 and 99–160; these read MSYPGYPPPPGGYPPAA and PVPP…PVPL. Disordered stretches follow at residues 1 to 38 and 84 to 199; these read MSYPGYPPPPGGYPPAAPGGGPWGGAAYPPPPSMPPIG and PVPP…DAPG. Residues 161 to 177 show a composition bias toward low complexity; it reads PGQQQPVPSYPGYPGSG. Annexin repeat units lie at residues 200–271, 272–343, 355–427, and 431–502; these read FDPL…ALMK, TPVL…SLSQ, SLAQ…AVVK, and NTPA…KICG. Residues K248 and K255 each carry the N6-acetyllysine modification. The residue at position 479 (K479) is an N6-acetyllysine.

It belongs to the annexin family. Interacts with S100A6. Interacts with PDCD6 in a calcium-dependent manner. Interacts with KIF23 during cytokinesis.

It is found in the cytoplasm. It localises to the melanosome. Its subcellular location is the nucleus envelope. The protein localises to the nucleus. The protein resides in the nucleoplasm. It is found in the cytoskeleton. It localises to the spindle. Binds specifically to calcyclin in a calcium-dependent manner. Required for midbody formation and completion of the terminal phase of cytokinesis. The protein is Annexin A11 (ANXA11) of Homo sapiens (Human).